A 208-amino-acid chain; its full sequence is Large ribosomal subunit protein uL3 (208 aa).

The segment at 123–147 (RHGQSRGPMAHGSRYHRRPGSMGPV) is disordered.

This sequence belongs to the universal ribosomal protein uL3 family. In terms of assembly, part of the 50S ribosomal subunit. Forms a cluster with proteins L14 and L19.

One of the primary rRNA binding proteins, it binds directly near the 3'-end of the 23S rRNA, where it nucleates assembly of the 50S subunit. This is Large ribosomal subunit protein uL3 from Streptococcus gordonii (strain Challis / ATCC 35105 / BCRC 15272 / CH1 / DL1 / V288).